A 159-amino-acid polypeptide reads, in one-letter code: MINLIPMTVRGAEKLRRELKKLKSINRPRIIAAIAEAREHGDLKENAEYHSAREEQSFCEGRIKEIELKLSNSQIIDVTKISNNGRVIFGSTVSILNIKNNEKFTYRIVGDDESDFKKNLISINSPIARGLIGKEINDVVIICTPGGDVEYKILKINYI.

The protein belongs to the GreA/GreB family.

Its function is as follows. Necessary for efficient RNA polymerase transcription elongation past template-encoded arresting sites. The arresting sites in DNA have the property of trapping a certain fraction of elongating RNA polymerases that pass through, resulting in locked ternary complexes. Cleavage of the nascent transcript by cleavage factors such as GreA or GreB allows the resumption of elongation from the new 3'terminus. GreA releases sequences of 2 to 3 nucleotides. The sequence is that of Transcription elongation factor GreA from Buchnera aphidicola subsp. Acyrthosiphon pisum (strain APS) (Acyrthosiphon pisum symbiotic bacterium).